The sequence spans 339 residues: D-alanine--D-alanine ligase (339 aa).

The 208-residue stretch at 126–333 (KQVLASVGMP…YSELVTRLVE (208 aa)) folds into the ATP-grasp domain. Residue 158-213 (AGELGYPLFVKPANLGSSVGISKVSGPGELERALDLAFSLGRRVILEAMTAHKPRE) coordinates ATP. Mg(2+) is bound by residues Asp-286, Glu-300, and Asn-302.

Belongs to the D-alanine--D-alanine ligase family. The cofactor is Mg(2+). Mn(2+) serves as cofactor.

The protein localises to the cytoplasm. It carries out the reaction 2 D-alanine + ATP = D-alanyl-D-alanine + ADP + phosphate + H(+). The protein operates within cell wall biogenesis; peptidoglycan biosynthesis. In terms of biological role, cell wall formation. This is D-alanine--D-alanine ligase from Deinococcus geothermalis (strain DSM 11300 / CIP 105573 / AG-3a).